Here is a 253-residue protein sequence, read N- to C-terminus: MIRHSCRALRFVRSFHDYNSDILKFVASNTLISDSAVYKGKLYELTVQRELYNKLRIGQLDVVGGAHDGGVDIKALWNLFPIFQCALDAGVIKEPSLPLKGTRINDTLVKPLVNQYDIKNKIAPSIEVLVQCKAYVSKISPKEIRELAGTYLSLTAKNKASLSTIPIMCSPQLPTSSSLKLLEKLNIPFLYLRINTLRHGSLNDFELTNTGQLMGYLMNPILKGYLEGSGFEEWMKFELYNNAMNHSQDKDFI.

The protein belongs to the RRG7 family.

Its subcellular location is the mitochondrion. The protein is Required for respiratory growth protein 7, mitochondrial (RRG7) of Candida glabrata (strain ATCC 2001 / BCRC 20586 / JCM 3761 / NBRC 0622 / NRRL Y-65 / CBS 138) (Yeast).